A 183-amino-acid chain; its full sequence is Adenylate kinase (183 aa).

Position 12–17 (12–17 (GAGKGT)) interacts with ATP. An NMP region spans residues 32 to 61 (STGDLLRAEVSAGSALGQEAESVMNRGELV). Residues T33, R38, 59 to 61 (ELV), 86 to 89 (GFPR), and Q93 contribute to the AMP site. The interval 127-133 (SRGRDDD) is LID. R128 provides a ligand contact to ATP. Positions 130 and 141 each coordinate AMP. ATP is bound at residue G169.

The protein belongs to the adenylate kinase family. As to quaternary structure, monomer.

The protein localises to the cytoplasm. The enzyme catalyses AMP + ATP = 2 ADP. Its pathway is purine metabolism; AMP biosynthesis via salvage pathway; AMP from ADP: step 1/1. Functionally, catalyzes the reversible transfer of the terminal phosphate group between ATP and AMP. Plays an important role in cellular energy homeostasis and in adenine nucleotide metabolism. The protein is Adenylate kinase of Synechococcus sp. (strain CC9311).